Reading from the N-terminus, the 491-residue chain is MSETKRVRVRYAPSPTGFLHIGNARTALFNYLFARHNDGDFIIRIEDTDAKRNIADGEESQMTNLKWLGMDWDEGVDVPGKYGPYRQSERQSIYEPLIQELLDKDLAYKCYCTEEELDAEREKQKANGEMPRYSGKCRHLTKEQQAEKEAQGFKPSIRFKVPANETITFNDMVKDDVSFESNGIGDFVIAKKDGIPTYNFAVAVDDHLMEISHVLRGDDHISNTPKQILIYNAFGWEPPIFGHMTLIVNESRRKLSKRDGSIIQFIEQYRDLGYLPEALFNFIAMLGWSPEGEEEIFSKEEFIKMFDPKRLSKSPALFDNVKLTWVNNQYVKKLPLNDVVELSLPHLQKAGVVSAELNQAELDWVHKLVSLYHEQMSYGAEIVPLSEMFFADAESITFDEEETAVLAEETVPTVISAFKKELEALEVLEAAEVKAAIKRVQKETGVKGKGLFMPIRIVTTGEMHGPELPLAIEVLGREKVLNRLDTWLKNN.

The 'HIGH' region signature appears at 13–23; the sequence is PSPTGFLHIGN. 4 residues coordinate Zn(2+): cysteine 110, cysteine 112, cysteine 137, and histidine 139. The 'KMSKS' region motif lies at 254–258; the sequence is KLSKR. Lysine 257 lines the ATP pocket.

It belongs to the class-I aminoacyl-tRNA synthetase family. Glutamate--tRNA ligase type 1 subfamily. Monomer. Zn(2+) is required as a cofactor.

It localises to the cytoplasm. It carries out the reaction tRNA(Glu) + L-glutamate + ATP = L-glutamyl-tRNA(Glu) + AMP + diphosphate. Functionally, catalyzes the attachment of glutamate to tRNA(Glu) in a two-step reaction: glutamate is first activated by ATP to form Glu-AMP and then transferred to the acceptor end of tRNA(Glu). This is Glutamate--tRNA ligase from Listeria monocytogenes serovar 1/2a (strain ATCC BAA-679 / EGD-e).